A 962-amino-acid chain; its full sequence is Insulin-degrading enzyme homolog (962 aa).

Positions 1 to 10 (MVANEQQQQQ) are enriched in low complexity. The disordered stretch occupies residues 1-21 (MVANEQQQQQQEEERKEVKLI). Residue H74 coordinates Zn(2+). Residue E77 is the Proton acceptor of the active site. Zn(2+) contacts are provided by H78 and E155.

Belongs to the peptidase M16 family. Homodimer. Requires Zn(2+) as cofactor.

Its subcellular location is the cytoplasm. This is Insulin-degrading enzyme homolog from Dictyostelium discoideum (Social amoeba).